Reading from the N-terminus, the 228-residue chain is Max-interacting protein 1 (228 aa).

Disordered stretches follow at residues 29–76 and 162–228; these read GYAS…NELE and GSTI…SFTS. The segment covering 43-56 has biased composition (basic residues); the sequence is QHSKPPRRLSRAQK. Positions 57-70 are enriched in polar residues; sequence HSSGSSNTSTANRS. The region spanning 67 to 119 is the bHLH domain; the sequence is ANRSTHNELEKNRRAHLRLCLERLKVLIPLGPDCTRHTTLGLLNKAKAHIKKL. Residues 173 to 183 are compositionally biased toward acidic residues; the sequence is EREEIEVDVES. The span at 216 to 228 shows a compositional bias: polar residues; the sequence is GYSSASVKLSFTS.

Efficient DNA binding requires dimerization with another bHLH protein. Binds DNA as a heterodimer with MAX. Interacts with SMC3. Interacts with RNF17.

It localises to the nucleus. Its function is as follows. Transcriptional repressor. MXI1 binds with MAX to form a sequence-specific DNA-binding protein complex which recognizes the core sequence 5'-CAC[GA]TG-3'. MXI1 thus antagonizes MYC transcriptional activity by competing for MAX. The polypeptide is Max-interacting protein 1 (Mxi1) (Rattus norvegicus (Rat)).